The primary structure comprises 545 residues: Glucans biosynthesis protein G (545 aa).

A signal peptide spans 1–34 (MVSLLRCQSFKPSSSLICSLALSAAFALSSSAFA). The segment at 38 to 60 (KPAENKPATPVVSPPKATAQPAN) is disordered.

Belongs to the OpgD/OpgG family.

The protein localises to the periplasm. The protein operates within glycan metabolism; osmoregulated periplasmic glucan (OPG) biosynthesis. Its function is as follows. Involved in the biosynthesis of osmoregulated periplasmic glucans (OPGs). This is Glucans biosynthesis protein G from Shewanella sp. (strain ANA-3).